A 350-amino-acid chain; its full sequence is Melatonin receptor type 1A-A (350 aa).

Residues 1–29 (MFMNGSSLNSSALDPSEQALQRPPWVTTT) lie on the Extracellular side of the membrane. N-linked (GlcNAc...) asparagine glycosylation is found at Asn-4 and Asn-9. The chain crosses the membrane as a helical span at residues 30-50 (LGCFLIFTIVVDILGNLLVIF). Topologically, residues 51–63 (SVYRNKKLQNAGN) are cytoplasmic. Residues 64 to 84 (IFVVSLAVADLVVAIYPYPLV) form a helical membrane-spanning segment. The Extracellular segment spans residues 85–101 (LTSIFHRGWNLGYMHCQ). The cysteines at positions 100 and 177 are disulfide-linked. Residues 102 to 122 (ISGFLMGVSVIGSIFNITGIA) form a helical membrane-spanning segment. Residues 123–144 (INCYCYICHSLKYDKLYSDKNS) are Cytoplasmic-facing. Residues 145–165 (VCYVLLIWALTVLAIVPNLFV) traverse the membrane as a helical segment. Topologically, residues 166 to 187 (GSLQYDPRVYSCTFEQSASSAY) are extracellular. The helical transmembrane segment at 188–208 (TIAVVFFHFILPIMIVTYCYL) threads the bilayer. Topologically, residues 209–240 (RIWVLVIQVRRRVKNDNRPKITPHDVRNFVTM) are cytoplasmic. Residues 241-261 (FVVFVLFAVCWAPLNFIGLAV) traverse the membrane as a helical segment. Over 262 to 267 (AISPER) the chain is Extracellular. The chain crosses the membrane as a helical span at residues 268 to 288 (VVPLIPEWLFVASYFMAYFNS). Residues 289–350 (CLNAIVYGVL…NNNQVKVDSV (62 aa)) lie on the Cytoplasmic side of the membrane.

This sequence belongs to the G-protein coupled receptor 1 family.

Its subcellular location is the cell membrane. In terms of biological role, high affinity receptor for melatonin. The activity of this receptor is mediated by pertussis toxin sensitive G proteins that inhibits adenylate cyclase activity. The protein is Melatonin receptor type 1A-A (mtnr1aa) of Danio rerio (Zebrafish).